The chain runs to 440 residues: MFLAQEIIRKKRDGHALSDEEIRFFINGIRDNTISEGQIAALAMTIFFHDMSMPERVSLTMAMRDSGTVLNWKSLNLNGPIVDKHSTGGVGDVTSLMLGPMVAACGGYVPMISGRGLGHTGGTLDKLEAIPGFDIFPDDNRFREIIKDVGVAIIGQTSSLAPADKRFYATRDITATVDSIPLITASILAKKLAEGLDALVMDVKVGSGAFMPTYELSAALAEAIVGVANGAGVRTTALLTDMNQVLASSAGNAVEVREAVQFLTGEYRNPRLFDVTMALCVEMLISGKLAADDAEARAKLQAVLDNGKAAEVFGRMVAAQKGPTDFVENYDHYLPTAMLSKAVYADTEGFISAMDTRALGMAVVSMGGGRRQASDTIDYSVGFTDMARLGDHVDGQRPLAVIHAKDENSWQEAAKAVKAAIKLDDKAPEITPTVYRRITE.

This sequence belongs to the thymidine/pyrimidine-nucleoside phosphorylase family. Homodimer.

The enzyme catalyses thymidine + phosphate = 2-deoxy-alpha-D-ribose 1-phosphate + thymine. It functions in the pathway pyrimidine metabolism; dTMP biosynthesis via salvage pathway; dTMP from thymine: step 1/2. In terms of biological role, the enzymes which catalyze the reversible phosphorolysis of pyrimidine nucleosides are involved in the degradation of these compounds and in their utilization as carbon and energy sources, or in the rescue of pyrimidine bases for nucleotide synthesis. The polypeptide is Thymidine phosphorylase (Klebsiella pneumoniae (strain 342)).